Consider the following 373-residue polypeptide: Alpha-ketoglutarate dependent kainoid synthase (373 aa).

The 117-residue stretch at 204–320 (TINSKKMFFT…RSSLITFYEP (117 aa)) folds into the Fe2OG dioxygenase domain. Fe cation contacts are provided by histidine 235, aspartate 237, and histidine 296. Arginine 311 contacts 2-oxoglutarate.

It belongs to the iron/ascorbate-dependent oxidoreductase family. The cofactor is Fe(2+).

The enzyme catalyses N-(7'-carboxy-7'-demethylgeranyl)-L-glutamate + 2-oxoglutarate + O2 = isodomoate A + succinate + CO2 + H2O. It carries out the reaction N-geranyl-L-glutamate + 2-oxoglutarate + O2 = dainate A + succinate + CO2 + H2O. The protein operates within secondary metabolite biosynthesis. Its function is as follows. Iron/ascorbate-dependent oxidoreductase: part of the gene cluster that mediates the biosynthesis of domoic acid (DA) and derivatives, natural products with neurochemical activity acting as ionotropic glutamate receptor (iGluR) agonists, thus being neurotoxins causing amnesic shellfish poisoning (ASP). Catalyzes the conversion of 7'-N-carboxy-L-geranyl-L-glutamic acid (cNGG) to isodomoic acid-A. Also mediates the conversion of N-geranyl-L-glutamic acid (L-NGG) to dainic acid A. This chain is Alpha-ketoglutarate dependent kainoid synthase, found in Pseudo-nitzschia multiseries (Marine planktonic diatom).